We begin with the raw amino-acid sequence, 98 residues long: Aspartyl/glutamyl-tRNA(Asn/Gln) amidotransferase subunit C (98 aa).

This sequence belongs to the GatC family. In terms of assembly, heterotrimer of A, B and C subunits.

It catalyses the reaction L-glutamyl-tRNA(Gln) + L-glutamine + ATP + H2O = L-glutaminyl-tRNA(Gln) + L-glutamate + ADP + phosphate + H(+). The enzyme catalyses L-aspartyl-tRNA(Asn) + L-glutamine + ATP + H2O = L-asparaginyl-tRNA(Asn) + L-glutamate + ADP + phosphate + 2 H(+). In terms of biological role, allows the formation of correctly charged Asn-tRNA(Asn) or Gln-tRNA(Gln) through the transamidation of misacylated Asp-tRNA(Asn) or Glu-tRNA(Gln) in organisms which lack either or both of asparaginyl-tRNA or glutaminyl-tRNA synthetases. The reaction takes place in the presence of glutamine and ATP through an activated phospho-Asp-tRNA(Asn) or phospho-Glu-tRNA(Gln). The protein is Aspartyl/glutamyl-tRNA(Asn/Gln) amidotransferase subunit C of Paenarthrobacter aurescens (strain TC1).